Consider the following 744-residue polypeptide: Dolasta-1(15),8-diene synthase (744 aa).

Residues 1–344 are terpene cyclase; sequence MASTMMNYQD…RRYNPAAPLP (344 aa). Mg(2+) is bound by residues aspartate 108 and aspartate 112. Substrate-binding positions include aspartate 108, aspartate 112, 198-201, 246-250, and 336-337; these read RHYD, SWDKE, and RY. Residues 108–112 carry the DDXXD motif; sequence DDLTD. The tract at residues 345-744 is prenyltransferase; sequence RREDIGKVNG…LHLITFQLKV (400 aa). Residues 399–422 are disordered; sequence YTTMTPAETSSDDKKKKAKASHET. Residues 409–422 show a composition bias toward basic and acidic residues; that stretch reads SDDKKKKAKASHET. Residues arginine 459 and histidine 488 each contribute to the isopentenyl diphosphate site. Mg(2+) contacts are provided by aspartate 495 and aspartate 499. Positions 495–499 match the DDXXD motif; the sequence is DDVQD. Arginine 504 is a dimethylallyl diphosphate binding site. Arginine 505 contacts isopentenyl diphosphate. Dimethylallyl diphosphate-binding residues include lysine 581, threonine 582, and glutamine 617.

It in the N-terminal section; belongs to the terpene synthase family. The protein in the C-terminal section; belongs to the FPP/GGPP synthase family. As to quaternary structure, hexamer. The cofactor is Mg(2+).

The enzyme catalyses isopentenyl diphosphate + (2E,6E)-farnesyl diphosphate = (2E,6E,10E)-geranylgeranyl diphosphate + diphosphate. It carries out the reaction (2E,6E,10E)-geranylgeranyl diphosphate = (5R,12R,14S)-dolasta-1(15),8-diene + diphosphate. It catalyses the reaction (2E,6E,10E)-geranylgeranyl diphosphate = delta-araneosene + diphosphate. In terms of biological role, bifunctional terpene synthase involved in the biosynthesis of the diterpenes delta-araneosene and dolasta-1(15),8-diene. The C-terminal prenyltransferase domain of CgDS catalyzes formation of the universal precursor of diterpene, geranylgeranyl diphosphate (GGPP), whereas the N-terminal terpene cyclase domain catalyzes the cyclization of GGPP to the intermediate delta-araneosene that is further converted to dolasta-1(15),8-diene in a second cyclization event. In some cases the cyclization stops at the delta-araneosene stage. The polypeptide is Dolasta-1(15),8-diene synthase (Colletotrichum gloeosporioides (Anthracnose fungus)).